Reading from the N-terminus, the 51-residue chain is MAAKKSFIIKQKLAKAKNQNRPLPQWYRLKTNNKIRYNAKRRHWRRTKLGL.

The protein belongs to the eukaryotic ribosomal protein eL39 family. Interacts with YIH1.

In Kluyveromyces lactis (strain ATCC 8585 / CBS 2359 / DSM 70799 / NBRC 1267 / NRRL Y-1140 / WM37) (Yeast), this protein is Large ribosomal subunit protein eL39 (RPL39).